The sequence spans 861 residues: DNA mismatch repair protein MutS (861 aa).

Position 618–625 (618–625 (GPNMGGKS)) interacts with ATP.

This sequence belongs to the DNA mismatch repair MutS family.

This protein is involved in the repair of mismatches in DNA. It is possible that it carries out the mismatch recognition step. This protein has a weak ATPase activity. In Shewanella sp. (strain MR-7), this protein is DNA mismatch repair protein MutS.